The sequence spans 192 residues: Inosine triphosphate pyrophosphatase (192 aa).

Position 10–15 (10–15) interacts with ITP; that stretch reads TGNANK. E43 contacts Mg(2+). ITP is bound by residues K56, 74–75, K91, 149–152, K173, and 178–179; these read DT, FGWD, and HR.

This sequence belongs to the HAM1 NTPase family. As to quaternary structure, homodimer. Mg(2+) serves as cofactor. It depends on Mn(2+) as a cofactor.

It is found in the cytoplasm. Its subcellular location is the nucleus. The enzyme catalyses ITP + H2O = IMP + diphosphate + H(+). The catalysed reaction is dITP + H2O = dIMP + diphosphate + H(+). It catalyses the reaction XTP + H2O = XMP + diphosphate + H(+). Pyrophosphatase that hydrolyzes non-canonical purine nucleotides such as inosine triphosphate (ITP), deoxyinosine triphosphate (dITP) or xanthosine 5'-triphosphate (XTP) to their respective monophosphate derivatives. The enzyme does not distinguish between the deoxy- and ribose forms. Probably excludes non-canonical purines from RNA and DNA precursor pools, thus preventing their incorporation into RNA and DNA and avoiding chromosomal lesions. In Candida glabrata (strain ATCC 2001 / BCRC 20586 / JCM 3761 / NBRC 0622 / NRRL Y-65 / CBS 138) (Yeast), this protein is Inosine triphosphate pyrophosphatase.